Consider the following 560-residue polypeptide: Diphtheria toxin homolog CRM228 (560 aa).

The N-terminal stretch at 1–25 is a signal peptide; that stretch reads MSRKLFASILIGALLGIGAPPSAHA. Residues His-46 and Tyr-90 each coordinate NAD(+). The active site involves Glu-173. 2 cysteine pairs are disulfide-bonded: Cys-211–Cys-226 and Cys-486–Cys-496.

The sequence is that of Diphtheria toxin homolog CRM228 from Corynebacterium diphtheriae.